The primary structure comprises 61 residues: uncharacterized protein (61 aa).

An N-terminal signal peptide occupies residues 1-30 (MDVEVANMAAKLRVRGLKLPNAIVVSTAIL).

This is an uncharacterized protein from Archaeoglobus fulgidus (strain ATCC 49558 / DSM 4304 / JCM 9628 / NBRC 100126 / VC-16).